The primary structure comprises 291 residues: ATP synthase gamma chain (291 aa).

This sequence belongs to the ATPase gamma chain family. As to quaternary structure, F-type ATPases have 2 components, CF(1) - the catalytic core - and CF(0) - the membrane proton channel. CF(1) has five subunits: alpha(3), beta(3), gamma(1), delta(1), epsilon(1). CF(0) has three main subunits: a, b and c.

The protein resides in the cell inner membrane. Produces ATP from ADP in the presence of a proton gradient across the membrane. The gamma chain is believed to be important in regulating ATPase activity and the flow of protons through the CF(0) complex. This Neisseria meningitidis serogroup C (strain 053442) protein is ATP synthase gamma chain.